A 506-amino-acid polypeptide reads, in one-letter code: Exopolysaccharide phosphotransferase NFA_48680 (506 aa).

Residues 484-506 (PAPWERVSAPSRRPLPESTAGAA) are disordered.

It belongs to the stealth family.

This Nocardia farcinica (strain IFM 10152) protein is Exopolysaccharide phosphotransferase NFA_48680.